The following is a 198-amino-acid chain: Nucleoside triphosphate pyrophosphatase 1 (198 aa).

The active-site Proton acceptor is aspartate 75.

The protein belongs to the Maf family. It depends on a divalent metal cation as a cofactor.

The protein resides in the cytoplasm. The enzyme catalyses a ribonucleoside 5'-triphosphate + H2O = a ribonucleoside 5'-phosphate + diphosphate + H(+). The catalysed reaction is a 2'-deoxyribonucleoside 5'-triphosphate + H2O = a 2'-deoxyribonucleoside 5'-phosphate + diphosphate + H(+). Nucleoside triphosphate pyrophosphatase. May have a dual role in cell division arrest and in preventing the incorporation of modified nucleotides into cellular nucleic acids. This is Nucleoside triphosphate pyrophosphatase 1 from Jannaschia sp. (strain CCS1).